A 324-amino-acid polypeptide reads, in one-letter code: 4-hydroxy-3-methylbut-2-enyl diphosphate reductase (324 aa).

C28 serves as a coordination point for [4Fe-4S] cluster. 2 residues coordinate (2E)-4-hydroxy-3-methylbut-2-enyl diphosphate: H57 and H90. Dimethylallyl diphosphate contacts are provided by H57 and H90. Residues H57 and H90 each coordinate isopentenyl diphosphate. Residue C112 participates in [4Fe-4S] cluster binding. Position 140 (H140) interacts with (2E)-4-hydroxy-3-methylbut-2-enyl diphosphate. H140 is a dimethylallyl diphosphate binding site. Isopentenyl diphosphate is bound at residue H140. Catalysis depends on E142, which acts as the Proton donor. A (2E)-4-hydroxy-3-methylbut-2-enyl diphosphate-binding site is contributed by T180. Position 210 (C210) interacts with [4Fe-4S] cluster. Residues S238, S239, N240, and S282 each coordinate (2E)-4-hydroxy-3-methylbut-2-enyl diphosphate. Dimethylallyl diphosphate is bound by residues S238, S239, N240, and S282. The isopentenyl diphosphate site is built by S238, S239, N240, and S282.

It belongs to the IspH family. Requires [4Fe-4S] cluster as cofactor.

It carries out the reaction isopentenyl diphosphate + 2 oxidized [2Fe-2S]-[ferredoxin] + H2O = (2E)-4-hydroxy-3-methylbut-2-enyl diphosphate + 2 reduced [2Fe-2S]-[ferredoxin] + 2 H(+). It catalyses the reaction dimethylallyl diphosphate + 2 oxidized [2Fe-2S]-[ferredoxin] + H2O = (2E)-4-hydroxy-3-methylbut-2-enyl diphosphate + 2 reduced [2Fe-2S]-[ferredoxin] + 2 H(+). It functions in the pathway isoprenoid biosynthesis; dimethylallyl diphosphate biosynthesis; dimethylallyl diphosphate from (2E)-4-hydroxy-3-methylbutenyl diphosphate: step 1/1. The protein operates within isoprenoid biosynthesis; isopentenyl diphosphate biosynthesis via DXP pathway; isopentenyl diphosphate from 1-deoxy-D-xylulose 5-phosphate: step 6/6. In terms of biological role, catalyzes the conversion of 1-hydroxy-2-methyl-2-(E)-butenyl 4-diphosphate (HMBPP) into a mixture of isopentenyl diphosphate (IPP) and dimethylallyl diphosphate (DMAPP). Acts in the terminal step of the DOXP/MEP pathway for isoprenoid precursor biosynthesis. In Ralstonia nicotianae (strain ATCC BAA-1114 / GMI1000) (Ralstonia solanacearum), this protein is 4-hydroxy-3-methylbut-2-enyl diphosphate reductase.